We begin with the raw amino-acid sequence, 207 residues long: tRNA (pseudouridine(54)-N(1))-methyltransferase (207 aa).

Residue L137 coordinates S-adenosyl-L-methionine.

Belongs to the methyltransferase superfamily. TrmY family. As to quaternary structure, homodimer.

The protein resides in the cytoplasm. It carries out the reaction pseudouridine(54) in tRNA + S-adenosyl-L-methionine = N(1)-methylpseudouridine(54) in tRNA + S-adenosyl-L-homocysteine + H(+). In terms of biological role, specifically catalyzes the N1-methylation of pseudouridine at position 54 (Psi54) in tRNAs. In Halorubrum lacusprofundi (strain ATCC 49239 / DSM 5036 / JCM 8891 / ACAM 34), this protein is tRNA (pseudouridine(54)-N(1))-methyltransferase.